The following is a 1370-amino-acid chain: Zinc finger MYM-type protein 3 (1370 aa).

Composition is skewed to low complexity over residues 1–12 (MDPSDFPSPFDP), 40–56 (APSR…SSGA), and 130–146 (GAGA…EPLA). Disordered regions lie at residues 1–73 (MDPS…PGGV) and 85–310 (GLLY…MGTK). A compositionally biased stretch (basic and acidic residues) spans 227–255 (TGKEIEKPPERVQKRSERVRRAEPPKPEV). Phosphoserine occurs at positions 265 and 269. Over residues 265 to 281 (SDEDSDAMVDDPNDEDF) the composition is skewed to acidic residues. Glycyl lysine isopeptide (Lys-Gly) (interchain with G-Cter in SUMO2) cross-links involve residues Lys310, Lys322, and Lys330. 9 consecutive MYM-type zinc fingers follow at residues 334-368 (QLFC…TKDS), 380-424 (HEFC…LHEV), 431-466 (HRLC…RPGG), 479-513 (KRFC…FEML), 523-561 (SLFC…PCYY), 569-606 (YQFC…KPEV), 614-648 (FQFC…HEKL), 655-694 (KSFC…GVTE), and 701-735 (WDFC…LETI). The span at 761–789 (NLDTQSGPESLLNSQSSESKPQTPSQTKV) shows a compositional bias: polar residues. The disordered stretch occupies residues 761–831 (NLDTQSGPES…PPPPATPRKN (71 aa)). Glycyl lysine isopeptide (Lys-Gly) (interchain with G-Cter in SUMO2) cross-links involve residues Lys780 and Lys788. Positions 790-799 (ENNHTVRTPD) are enriched in basic and acidic residues. Thr797 is subject to Phosphothreonine. Residue Lys806 forms a Glycyl lysine isopeptide (Lys-Gly) (interchain with G-Cter in SUMO2) linkage. Pro residues predominate over residues 816 to 827 (VPTPPPPPPPAT). A phosphothreonine mark is found at Thr818 and Thr827. Residues Lys848, Lys862, Lys921, and Lys1276 each participate in a glycyl lysine isopeptide (Lys-Gly) (interchain with G-Cter in SUMO2) cross-link.

In terms of assembly, may be a component of a BHC histone deacetylase complex that contains HDAC1, HDAC2, HMG20B/BRAF35, KDM1A, RCOR1/CoREST, PHF21A/BHC80, ZMYM2, ZNF217, ZMYM3, GSE1 and GTF2I. Ubiquitously expressed in all embryonic stages and adult tissues.

It localises to the nucleus. Its function is as follows. Plays a role in the regulation of cell morphology and cytoskeletal organization. The polypeptide is Zinc finger MYM-type protein 3 (Zmym3) (Mus musculus (Mouse)).